The primary structure comprises 599 residues: Adenine deaminase (599 aa).

The protein belongs to the metallo-dependent hydrolases superfamily. Adenine deaminase family. Requires Mn(2+) as cofactor.

The catalysed reaction is adenine + H2O + H(+) = hypoxanthine + NH4(+). The protein is Adenine deaminase of Clostridium botulinum (strain Loch Maree / Type A3).